Reading from the N-terminus, the 391-residue chain is Casein kinase II subunit alpha (391 aa).

The tract at residues 36–41 (QDDYQL) is interaction with beta subunit. The Protein kinase domain maps to 39 to 324 (YQLVRKLGRG…AREAMEHPYF (286 aa)). ATP is bound by residues 45 to 53 (LGRGKYSEV) and K68. D156 functions as the Proton acceptor in the catalytic mechanism. Residues 335–346 (GSSNMPGGSTPV) show a composition bias toward polar residues. The tract at residues 335 to 363 (GSSNMPGGSTPVSSASMMSGISSVPTPSP) is disordered. Over residues 347-357 (SSASMMSGISS) the composition is skewed to low complexity.

Belongs to the protein kinase superfamily. Ser/Thr protein kinase family. CK2 subfamily. In terms of assembly, tetramer composed of an alpha chain, an alpha' and two beta chains. Interacts with RNPS1.

Its subcellular location is the nucleus. It catalyses the reaction L-seryl-[protein] + ATP = O-phospho-L-seryl-[protein] + ADP + H(+). The enzyme catalyses L-threonyl-[protein] + ATP = O-phospho-L-threonyl-[protein] + ADP + H(+). Catalytic subunit of a constitutively active serine/threonine-protein kinase complex that phosphorylates a large number of substrates containing acidic residues C-terminal to the phosphorylated serine or threonine. Regulates numerous cellular processes, such as cell cycle progression, apoptosis and transcription, as well as viral infection. May act as a regulatory node which integrates and coordinates numerous signals leading to an appropriate cellular response. During mitosis, functions as a component of the p53/TP53-dependent spindle assembly checkpoint (SAC) that maintains cyclin-B-CDK1 activity and G2 arrest in response to spindle damage. Can also negatively regulate apoptosis. Phosphorylates the caspases CASP9 and CASP2 and the apoptotic regulator NOL3. Phosphorylation protects CASP9 from cleavage and activation by CASP8, and inhibits the dimerization of CASP2 and activation of CASP8. Plays an important role in the circadian clock function by phosphorylating BMAL1. This Gallus gallus (Chicken) protein is Casein kinase II subunit alpha (CSNK2A1).